The sequence spans 311 residues: Coelenterazine h 2-monooxygenase (311 aa).

One can recognise an AB hydrolase-1 domain in the interval Asn-45–Ala-291. Residues Asp-162 and His-285 each coordinate substrate.

In terms of assembly, monomer.

The enzyme catalyses coelenterazine h + O2 = excited coelenteramide h monoanion + hnu + CO2 + H(+). Upon binding the substrate, the enzyme catalyzes an oxygenation, producing a very short-lived hydroperoxide that cyclizes into a dioxetanone structure, which collapses, releasing a CO(2) molecule. The spontaneous breakdown of the dioxetanone releases the energy (about 50 kcal/mole) that is necessary to generate the excited state of the coelenteramide product, which is the singlet form of the monoanion. In vivo the product undergoes the process of nonradiative energy transfer to an accessory protein, a green fluorescent protein (GFP), which results in green bioluminescence. In vitro, in the absence of GFP, the product emits blue light. The protein is Coelenterazine h 2-monooxygenase of Renilla reniformis (Sea pansy).